Reading from the N-terminus, the 141-residue chain is MDPLTINFSRIETFGLFVGNEPPPVVSSLFFLLNILFGSLEWVLALVFTLLLFSFFLFLDLMVSVFKLIGLGSPCNFRKRPHALQRTVPCSSLLHRGVLTVKQFWHVGWSSPSQSSTPAAAESVGEGSFNESLSTILLYII.

This is an uncharacterized protein from Saccharomyces cerevisiae (strain ATCC 204508 / S288c) (Baker's yeast).